A 270-amino-acid polypeptide reads, in one-letter code: Putative pyruvate, phosphate dikinase regulatory protein (270 aa).

149–156 (GVSRTSKT) contacts ADP.

Belongs to the pyruvate, phosphate/water dikinase regulatory protein family. PDRP subfamily.

The catalysed reaction is N(tele)-phospho-L-histidyl/L-threonyl-[pyruvate, phosphate dikinase] + ADP = N(tele)-phospho-L-histidyl/O-phospho-L-threonyl-[pyruvate, phosphate dikinase] + AMP + H(+). It carries out the reaction N(tele)-phospho-L-histidyl/O-phospho-L-threonyl-[pyruvate, phosphate dikinase] + phosphate + H(+) = N(tele)-phospho-L-histidyl/L-threonyl-[pyruvate, phosphate dikinase] + diphosphate. Functionally, bifunctional serine/threonine kinase and phosphorylase involved in the regulation of the pyruvate, phosphate dikinase (PPDK) by catalyzing its phosphorylation/dephosphorylation. In Thermoanaerobacter pseudethanolicus (strain ATCC 33223 / 39E) (Clostridium thermohydrosulfuricum), this protein is Putative pyruvate, phosphate dikinase regulatory protein.